Here is a 364-residue protein sequence, read N- to C-terminus: NADH-quinone oxidoreductase subunit H (364 aa).

A run of 8 helical transmembrane segments spans residues 15–35, 84–104, 123–143, 169–189, 206–226, 257–277, 302–322, and 341–361; these read LLVL…IAFL, AVFI…WAAI, VGVL…IMGG, IGFV…TTIV, YFPL…SALA, LFML…TILF, LSGL…FALV, and IFLP…TFVG.

The protein belongs to the complex I subunit 1 family. As to quaternary structure, NDH-1 is composed of 14 different subunits. Subunits NuoA, H, J, K, L, M, N constitute the membrane sector of the complex.

It localises to the cell inner membrane. It catalyses the reaction a quinone + NADH + 5 H(+)(in) = a quinol + NAD(+) + 4 H(+)(out). Its function is as follows. NDH-1 shuttles electrons from NADH, via FMN and iron-sulfur (Fe-S) centers, to quinones in the respiratory chain. The immediate electron acceptor for the enzyme in this species is believed to be ubiquinone. Couples the redox reaction to proton translocation (for every two electrons transferred, four hydrogen ions are translocated across the cytoplasmic membrane), and thus conserves the redox energy in a proton gradient. This subunit may bind ubiquinone. This Hyphomonas neptunium (strain ATCC 15444) protein is NADH-quinone oxidoreductase subunit H.